Here is a 362-residue protein sequence, read N- to C-terminus: Phosphoserine aminotransferase (362 aa).

An L-glutamate-binding site is contributed by arginine 43. Residues 77 to 78, tryptophan 103, threonine 153, aspartate 173, and glutamine 196 contribute to the pyridoxal 5'-phosphate site; that span reads AS. N6-(pyridoxal phosphate)lysine is present on lysine 197. 238–239 lines the pyridoxal 5'-phosphate pocket; that stretch reads NT.

This sequence belongs to the class-V pyridoxal-phosphate-dependent aminotransferase family. SerC subfamily. In terms of assembly, homodimer. The cofactor is pyridoxal 5'-phosphate.

Its subcellular location is the cytoplasm. The catalysed reaction is O-phospho-L-serine + 2-oxoglutarate = 3-phosphooxypyruvate + L-glutamate. It carries out the reaction 4-(phosphooxy)-L-threonine + 2-oxoglutarate = (R)-3-hydroxy-2-oxo-4-phosphooxybutanoate + L-glutamate. It participates in amino-acid biosynthesis; L-serine biosynthesis; L-serine from 3-phospho-D-glycerate: step 2/3. The protein operates within cofactor biosynthesis; pyridoxine 5'-phosphate biosynthesis; pyridoxine 5'-phosphate from D-erythrose 4-phosphate: step 3/5. Catalyzes the reversible conversion of 3-phosphohydroxypyruvate to phosphoserine and of 3-hydroxy-2-oxo-4-phosphonooxybutanoate to phosphohydroxythreonine. In Niallia circulans (Bacillus circulans), this protein is Phosphoserine aminotransferase (serC).